Consider the following 280-residue polypeptide: Thioredoxin-related transmembrane protein 1 (280 aa).

Positions 1-26 (MAPSGSLAVPLAVLVLLLWGAPWTHG) are cleaved as a signal peptide. In terms of domain architecture, Thioredoxin spans 27 to 132 (RRSNVRVITD…FINFISDKEW (106 aa)). Residues 27–180 (RRSNVRVITD…EDLGLPVWGS (154 aa)) are Extracellular-facing. Catalysis depends on nucleophile residues Cys56 and Cys59. Cys56 and Cys59 are oxidised to a cystine. Residues 181–203 (YTVFALATLFSGLLLGLCMIFVA) traverse the membrane as a helical segment. The Cytoplasmic segment spans residues 204–280 (DCLCPSKRRR…LGPSLATDKS (77 aa)). Residues Cys205 and Cys207 are each lipidated (S-palmitoyl cysteine). Residues 218–280 (PYPSKKLLSE…LGPSLATDKS (63 aa)) form a disordered region. Phosphoserine occurs at positions 228, 247, 270, 274, and 280. Over residues 237–252 (EEQEADEEDVSEEEAE) the composition is skewed to acidic residues.

As to quaternary structure, interacts with ATP2A2. Palmitoylated; palmitoylation is required for localization to mitochondria-associated endoplasmic reticulum membrane (MAM). In terms of tissue distribution, ubiquitous. Highly expressed in kidney, liver, placenta and lung.

Its subcellular location is the endoplasmic reticulum membrane. It is found in the mitochondrion membrane. It localises to the secreted. It catalyses the reaction Catalyzes the rearrangement of -S-S- bonds in proteins.. Its function is as follows. Thiredoxin domain-containing protein that participates in various redox reactions through the reversible oxidation of its active center dithiol to a disulfide and catalyze dithiol-disulfide exchange reactions. Acts as a key inhibitor of the alternative triglyceride biosynthesis pathway by inhibiting the activity of TMEM68/DIESL at the endoplasmic reticulum, thereby restricting accumulation of triacylglycerol. The alternative triglyceride biosynthesis pathway mediates formation of triacylglycerol from diacylglycerol and membrane phospholipids. Acts as a protein disulfide isomerase by catalyzing formation or reduction of disulfide bonds. Specifically mediates formation of disulfide bonds of transmembrane proteins at the endoplasmic reticulum membrane. Involved in endoplasmic reticulum-associated degradation (ERAD) via its protein disulfide isomerase activity by acting on folding-defective polypeptides at the endoplasmic reticulum membrane. Acts as a negative regulator of platelet aggregation following secretion in the extracellular space. Acts as a regulator of endoplasmic reticulum-mitochondria contact sites via its ability to regulate redox signals. Regulates endoplasmic reticulum-mitochondria Ca(2+) flux. This Homo sapiens (Human) protein is Thioredoxin-related transmembrane protein 1.